Reading from the N-terminus, the 567-residue chain is Interleukin-1 receptor-like 1 (567 aa).

Residues 1–26 (MIDRQRMGLWALAILTLPMYLTVTEG) form the signal peptide. Ig-like C2-type domains follow at residues 27–109 (SKSS…LNVT) and 120–203 (PDYL…VTAT). Residues 27-332 (SKSSWGLENE…LRRKQPIDHR (306 aa)) lie on the Extracellular side of the membrane. Cys-42 and Cys-93 form a disulfide bridge. 6 N-linked (GlcNAc...) asparagine glycosylation sites follow: Asn-60, Asn-101, Asn-107, Asn-146, Asn-176, and Asn-194. Disulfide bonds link Cys-117-Cys-157 and Cys-139-Cys-187. Residues 204–216 (RSFTVEEKGFSMF) form a flexible linker region. Residues 217–324 (PVITNPPYNH…GMIRHTIRLR (108 aa)) enclose the Ig-like C2-type 3 domain. Residues Asn-225, Asn-259, and Asn-278 are each glycosylated (N-linked (GlcNAc...) asparagine). 2 disulfide bridges follow: Cys-240-Cys-308 and Cys-243-Cys-287. A Glycyl lysine isopeptide (Lys-Gly) (interchain with G-Cter in ubiquitin) cross-link involves residue Lys-326. A helical transmembrane segment spans residues 333–355 (SIYYIVAGCSLLLMFINVLVIVL). The Cytoplasmic portion of the chain corresponds to 356–567 (KVFWIEVALF…GKACLDLKHF (212 aa)). The region spanning 380–540 (KLYDAYIIYP…KFWKHVRYQM (161 aa)) is the TIR domain. Ser-442 is subject to Phosphoserine; by GSK3-beta. Glu-466 is an active-site residue.

This sequence belongs to the interleukin-1 receptor family. Interacts with MYD88, IRAK1, IRAK4, and TRAF6. Bound to its ligand IL33, interacts with IL1RAP to form the minimal interleukin-33 signaling complex with a 1:1:1 stoichiometry. Interacts with KIT (bound to KITLG/SCF). A mast cell-specific KITLG/SCF-induced interleukin-33 signaling complex contains IL1RL1, IL1RAP, KIT and MYD88. Interacts with TMED1. In terms of processing, phosphorylated by GSK3B at Ser-442; leading to proteasomal degradation. Ubiquitinated at Lys-326 in a FBXL19-mediated manner; leading to proteasomal degradation. Ubiquitination by TRAF6 via 'Lys-27'-linked polyubiquitination and deubiquitination by USP38 serves as a critical regulatory mechanism for fine-tuning IL1RL1-mediated inflammatory response. As to expression, predominantly expressed in hematopoietic tissues, and in macrophage, erythroid, epithelial and fibroblast cell lines. Isoform A is expressed in brain astrocytes and microglia. Isoform B is expressed in brain endothelial cells.

It is found in the cell membrane. It localises to the secreted. The catalysed reaction is NAD(+) + H2O = ADP-D-ribose + nicotinamide + H(+). Receptor for interleukin-33 (IL-33) which plays crucial roles in innate and adaptive immunity, contributing to tissue homeostasis and responses to environmental stresses together with coreceptor IL1RAP. Its stimulation recruits MYD88, IRAK1, IRAK4, and TRAF6, followed by phosphorylation of MAPK3/ERK1 and/or MAPK1/ERK2, MAPK14, and MAPK8. Possibly involved in helper T-cell function. Upon tissue injury, induces UCP2-dependent mitochondrial rewiring that attenuates the generation of reactive oxygen species and preserves the integrity of Krebs cycle required for persistent production of itaconate and subsequent GATA3-dependent differentiation of inflammation-resolving alternatively activated macrophages. In terms of biological role, inhibits IL-33 signaling. This chain is Interleukin-1 receptor-like 1 (Il1rl1), found in Mus musculus (Mouse).